The sequence spans 686 residues: AsmA family protein YhjG (686 aa).

Residues methionine 1–lysine 6 are Cytoplasmic-facing. Residues isoleucine 7–alanine 27 traverse the membrane as a helical segment. Topologically, residues threonine 28–lysine 686 are periplasmic. The interval valine 372–alanine 396 is disordered. A compositionally biased stretch (basic and acidic residues) spans lysine 376–lysine 391.

This sequence belongs to the AsmA family.

It is found in the cell inner membrane. This chain is AsmA family protein YhjG (yhjG), found in Escherichia coli (strain K12).